A 336-amino-acid polypeptide reads, in one-letter code: UDP-galactose transporter 1 (336 aa).

Helical transmembrane passes span 11–31 (LAIL…KWIF), 38–58 (FPLS…YIVI), 83–103 (FVFC…PVSF), 131–151 (IWAS…TELS), 154–174 (MFGF…TILA), 193–213 (APFA…SGIL), 227–247 (IIIL…FYVI), 254–274 (TFNV…WLIF), and 278–298 (ISYM…FYGY).

Belongs to the TPT transporter family. TPT (TC 2.A.7.9) subfamily.

It is found in the membrane. Its function is as follows. Nucleotide sugar transporter that specifically transports UDP-galactose. The polypeptide is UDP-galactose transporter 1 (Arabidopsis thaliana (Mouse-ear cress)).